Here is a 488-residue protein sequence, read N- to C-terminus: MNLEETMPLVFERSIPGRIGFSLPESDVPETNAGDYFDEAYLRSTPADLPELSELEIMRHYTNLSNHNFGVDSGFYPLGSCTMKYNPKINEKVARFPGFANIHPNQPESSVQGALELLYDLQTSLVEITGMDEVTLQPAAGAHGEWTGLMLIRAFHEKNGDTKRTKVIIPDSAHGTNPASAAVAGFDVVTVKSNEKGLVDVADLKKVVGEDTAALMLTNPNTLGLFEKDIVEMAEIVHAAGGKLYYDGANLNAIMAKVRPGDMGFDVVHLNLHKTFTGPHGGGGPGSGPIGVKKELIPFLPTPVLTKKDDAYTFDYNYPDSIGRVKPYYGNFGINVRAYTYIRTMGPDGLKLVTEYAVLNANYMMRKLQDAYDLPFDQVCKHEFVLSGNRQKKLGVRTVDIAKRLLDHNFHPPTVYFPLIVGEAIMIEPTETESKETLDSFIDTMLKIAKEAEENPEIVQEAPHSTYVKRLDETRAARKPVLRYQKEV.

Lys274 carries the post-translational modification N6-(pyridoxal phosphate)lysine.

The protein belongs to the GcvP family. C-terminal subunit subfamily. The glycine cleavage system is composed of four proteins: P, T, L and H. In this organism, the P 'protein' is a heterodimer of two subunits. Requires pyridoxal 5'-phosphate as cofactor.

It catalyses the reaction N(6)-[(R)-lipoyl]-L-lysyl-[glycine-cleavage complex H protein] + glycine + H(+) = N(6)-[(R)-S(8)-aminomethyldihydrolipoyl]-L-lysyl-[glycine-cleavage complex H protein] + CO2. The glycine cleavage system catalyzes the degradation of glycine. The P protein binds the alpha-amino group of glycine through its pyridoxal phosphate cofactor; CO(2) is released and the remaining methylamine moiety is then transferred to the lipoamide cofactor of the H protein. This Listeria innocua serovar 6a (strain ATCC BAA-680 / CLIP 11262) protein is Probable glycine dehydrogenase (decarboxylating) subunit 2.